Consider the following 122-residue polypeptide: Large ribosomal subunit protein uL18 (122 aa).

The segment covering 1–21 (MSKLSRKQQTQKRHRRLRRHL) has biased composition (basic residues). The tract at residues 1-26 (MSKLSRKQQTQKRHRRLRRHLTGTSD) is disordered.

Belongs to the universal ribosomal protein uL18 family. In terms of assembly, part of the 50S ribosomal subunit; part of the 5S rRNA/L5/L18/L25 subcomplex. Contacts the 5S and 23S rRNAs.

This is one of the proteins that bind and probably mediate the attachment of the 5S RNA into the large ribosomal subunit, where it forms part of the central protuberance. This chain is Large ribosomal subunit protein uL18, found in Parasynechococcus marenigrum (strain WH8102).